A 2151-amino-acid polypeptide reads, in one-letter code: Protein PRR14L (2151 aa).

2 stretches are compositionally biased toward basic and acidic residues: residues 112–123 (KRSESMEPKVFR) and 134–154 (EPSE…EEKT). Disordered regions lie at residues 112–160 (KRSE…SQED), 206–225 (GTKT…KDLS), and 314–350 (QLHG…SDLS). The residue at position 157 (S157) is a Phosphoserine. A compositionally biased stretch (polar residues) spans 322-350 (QPSSTHDSPTATSPLKENSEVSCFTSDLS). Phosphoserine occurs at positions 582 and 945. Positions 974–1017 (SNQNRPDECKSEGQSAKEMLSSDQRETVTEPHGEVNHNQKDLLV) are disordered. Residues 996–1013 (DQRETVTEPHGEVNHNQK) show a composition bias toward basic and acidic residues. S1029 carries the phosphoserine modification. Over residues 1091 to 1103 (DSRSTLSRRELDA) the composition is skewed to basic and acidic residues. Disordered regions lie at residues 1091–1115 (DSRS…DSDF), 1178–1226 (DSHY…SCHD), 1782–1802 (TGVH…PLQD), and 1986–2012 (AACP…KVSQ). A compositionally biased stretch (polar residues) spans 1178 to 1187 (DSHYGQQDKG). A compositionally biased stretch (basic and acidic residues) spans 1188–1201 (TSLRETQEMTEGSR).

In Homo sapiens (Human), this protein is Protein PRR14L (PRR14L).